Consider the following 440-residue polypeptide: Transposon Ty1-MR1 Gag polyprotein (440 aa).

Composition is skewed to polar residues over residues 1–31 (MESQ…TTQD), 46–60 (VSTQ…TPLS), and 137–168 (VGTH…TNQH). Disordered regions lie at residues 1-88 (MESQ…YPQQ), 137-174 (VGTH…PPPI), and 350-424 (QQES…TTEP). An RNA-binding region spans residues 299–401 (NNGIPINNKV…NSQSRTARAH (103 aa)). Positions 363–372 (SPSDEKKDSR) are enriched in basic and acidic residues. The segment covering 373-411 (TYTNTTKPKSITRNSQKPNNSQSRTARAHNVSTFNNSPG) has biased composition (polar residues).

As to quaternary structure, homotrimer.

Its subcellular location is the cytoplasm. Functionally, capsid protein (CA) is the structural component of the virus-like particle (VLP), forming the shell that encapsulates the retrotransposons dimeric RNA genome. The particles are assembled from trimer-clustered units and there are holes in the capsid shells that allow for the diffusion of macromolecules. CA also has nucleocapsid-like chaperone activity, promoting primer tRNA(i)-Met annealing to the multipartite primer-binding site (PBS), dimerization of Ty1 RNA and initiation of reverse transcription. This is Transposon Ty1-MR1 Gag polyprotein (TY1A-MR1) from Saccharomyces cerevisiae (strain ATCC 204508 / S288c) (Baker's yeast).